The sequence spans 193 residues: Non-specific lipid transfer protein GPI-anchored 2 (193 aa).

A signal peptide spans Met-1 to Ala-22. Disulfide bonds link Cys-38-Cys-83, Cys-48-Cys-67, Cys-68-Cys-110, and Cys-81-Cys-120. An N-linked (GlcNAc...) asparagine glycan is attached at Asn-44. The segment at Ala-143–Arg-164 is disordered. Gly-165 carries GPI-anchor amidated glycine lipidation. The propeptide at Ser-166–Cys-193 is removed in mature form.

The protein belongs to the plant LTP family. Post-translationally, O-glycosylated on hydroxyprolines; noncontiguous hydroxylproline residues are glycosylated with arabinogalactan. Up-regulated in the epidermis of top stems. Expressed in roots, cotyledons, seedlings, leaves, stems, buds, flower and silique walls. Preferentially expressed in the shoot apical meristem and the root meristem. Also detected in expanding leaves and petals, developing flowers, and elongating pistils, stamens and siliques.

The protein resides in the cell membrane. Its function is as follows. Lipid transfer protein that, together with LTPG1, binds to lipids and functions as a component of the cuticular lipid export machinery that performs extensive export of intracellular lipids (e.g. C29 alkane) from epidermal cells to the surface to build the cuticular wax layer and silique walls. Contributes to pre-invasive defense against some non-host powdery mildew pathogens by preventing the penetration of the epidermal cell wall by the fungal agents (e.g. Blumeria graminis f. sp. hordei (Bgh)). Involved in seed and ovule maturation and development, probably by regulating the fatty acids homeostasis during suberin and sporopollenin biosynthesis or deposition. The polypeptide is Non-specific lipid transfer protein GPI-anchored 2 (Arabidopsis thaliana (Mouse-ear cress)).